We begin with the raw amino-acid sequence, 317 residues long: MPAQGSQRGLLGAVNFTPTATPHLRPAANQTGPQCLEVSVPDGLFLCLGLVSLVENTLVVAAIAKNRNLHSPMYCFICCLALSDLLVSVSNLLETAVLLLLEVGALAAQATVVQQLGNVIDVLICSSMVSSLCSLGAIAMDRYISIFYALRYHSIVTLARARRAIAAVWAASILSSTLFITYYDRTAALLCLVVFFLAMLVLMALLYVHMLIQACQHAQAIARLHKRQHPVQQGWGLKGAATLTILLGVFFLCWGPFFLHLTLIAVCPQHPTCSCIFKNFRLFLALIICNTIVDPLIYAFRSQELRRTLKEVLLFSW.

Topologically, residues 1–37 (MPAQGSQRGLLGAVNFTPTATPHLRPAANQTGPQCLE) are extracellular. Asn29 carries an N-linked (GlcNAc...) asparagine glycan. Residues 38 to 63 (VSVPDGLFLCLGLVSLVENTLVVAAI) traverse the membrane as a helical segment. Topologically, residues 64-72 (AKNRNLHSP) are cytoplasmic. The helical transmembrane segment at 73–93 (MYCFICCLALSDLLVSVSNLL) threads the bilayer. Residues 94–118 (ETAVLLLLEVGALAAQATVVQQLGN) are Extracellular-facing. The helical transmembrane segment at 119-140 (VIDVLICSSMVSSLCSLGAIAM) threads the bilayer. Topologically, residues 141–163 (DRYISIFYALRYHSIVTLARARR) are cytoplasmic. Residues 164 to 183 (AIAAVWAASILSSTLFITYY) form a helical membrane-spanning segment. At 184–191 (DRTAALLC) the chain is on the extracellular side. A helical transmembrane segment spans residues 192–211 (LVVFFLAMLVLMALLYVHML). The Cytoplasmic portion of the chain corresponds to 212–240 (IQACQHAQAIARLHKRQHPVQQGWGLKGA). Residues 241–266 (ATLTILLGVFFLCWGPFFLHLTLIAV) form a helical membrane-spanning segment. Residues 267–279 (CPQHPTCSCIFKN) lie on the Extracellular side of the membrane. The chain crosses the membrane as a helical span at residues 280 to 300 (FRLFLALIICNTIVDPLIYAF). At 301–317 (RSQELRRTLKEVLLFSW) the chain is on the cytoplasmic side.

This sequence belongs to the G-protein coupled receptor 1 family. In terms of assembly, interacts with MGRN1, but does not undergo MGRN1-mediated ubiquitination; this interaction competes with GNAS-binding and thus inhibits agonist-induced cAMP production. Interacts with OPN3; the interaction results in a decrease in MC1R-mediated cAMP signaling and ultimately a decrease in melanin production in melanocytes.

It is found in the cell membrane. Functionally, receptor for MSH (alpha, beta and gamma) and ACTH. The activity of this receptor is mediated by G proteins which activate adenylate cyclase. Mediates melanogenesis, the production of eumelanin (black/brown) and phaeomelanin (red/yellow), via regulation of cAMP signaling in melanocytes. In Eulemur fulvus fulvus (Brown lemur), this protein is Melanocyte-stimulating hormone receptor (MC1R).